A 911-amino-acid chain; its full sequence is MSAAMTAEVCEDHTKPMLMLLDGNSLAFRAFYALPTENFKTRGGLTTNAVYGFTAMLINLLREEAPTHIAAAFDVSRKTFRSECYAGYKANRSSIPAEFHGQIDITKEVLGALGITVFAEAGFEADDLIATLATQAENEGYRVLVVTGDRDALQLVSNDVTVLYPRKGVSELTRFTPEAVIEKYGVTPAQYPDLAALRGDPSDNLPGIPGVGEKTAAKWIVDYGSLQGLVDNVESVRGKVGEALRTHLASVVRNRELTELVKDVPLVQTSDTLRLQPWDRDRIHRLFDNLEFRVLRDRLFEALAAAGERVPEVDEGFDVRGGLLESGTVGRWLAKHADDGRRSGLAIVGTHLPHGGDATALAVAAADGNGGYIDTAMLTPDDDDALAAWLADPDNPKALHEAKLAMHDLAGRGWTLGGITSDTALAAYLVRPGQRSFTLDDLSLRYLRRELRAETPEQEQFSLLDNVDEVDKQAIQTLILRARAVVDLAAALDAELDLIDSTSLLGEMELPVQQVLADMEKAGIAADLRLLTELQSQFGDQIRDAAEAAYAVIGKQINLSSPKQLQVVLFEELGMPKTKRTKTGYTTDADALQSLFCKTEHPFLQHLLTHRDVTRLKVTVDGLLNAVAADGRIHTTFNQTIATTGRLSSTEPNLQNIPIRTNAGRQIRDAFVVGSENNGYTELMTADYSQIEMRIMAHLSRDEGLIEAFHTGEDLHSFVASRAFGIPIEDITPELRRRVKAMSYGLAYGLSAYGLATQLKISTEEAKLQMEQYFARFGGVRDYLMDVVEQARKDGYTSTVLGRRRYLPELDSSNRQIREAAERAALNAPIQGSAADIIKVAMIAVDKSLKQAKLASRMLLQVHDELLFEVAIGEREQIEAMVREQMGSAYPLDVPLEVSVGFGRSWGAAAH.

The region spanning Val-186–Arg-280 is the 5'-3' exonuclease domain. The 178-residue stretch at Arg-320–Asp-497 folds into the 3'-5' exonuclease domain.

The protein belongs to the DNA polymerase type-A family. As to quaternary structure, single-chain monomer with multiple functions.

It catalyses the reaction DNA(n) + a 2'-deoxyribonucleoside 5'-triphosphate = DNA(n+1) + diphosphate. Functionally, in addition to polymerase activity, this DNA polymerase exhibits 3'-5' and 5'-3' exonuclease activity. In Mycobacterium leprae (strain TN), this protein is DNA polymerase I (polA).